Reading from the N-terminus, the 496-residue chain is Galactan beta-1,4-galactosyltransferase GALS1 (496 aa).

Residues 22 to 42 (IIATLLALSLVMIVWNLPPYY) form a helical membrane-spanning segment. The 233-residue stretch at 232–464 (DYLYCGSSLY…AKKKVTLYNK (233 aa)) folds into the GT92 domain.

This sequence belongs to the glycosyltransferase 92 family. As to expression, expressed in root vasculature, mature leaves, trichomes, flowers, siliques and seeds.

The protein resides in the golgi apparatus membrane. Involved in the biosynthesis of beta-1,4-galactan. Can transfer galactose residues from UDP-galactose to beta-1,4-galactopentaose in vitro. Forms specifically beta-1,4-galactosyl linkages and can add successive beta-1,4-galactosyl residues to the acceptor. Beta-1,4-galactans are abundant polysaccharides in plant cell walls and are found as side-chain of rhamnogalacturonan I, which is a major component of pectin. The polypeptide is Galactan beta-1,4-galactosyltransferase GALS1 (Arabidopsis thaliana (Mouse-ear cress)).